We begin with the raw amino-acid sequence, 360 residues long: MAQNTLRLVEENGVDKSKALDAALSQIERAFGKGSIMRLGANDKVVEIETISTGSLGLDIALGVGGLPRGRIIEIYGPESSGKTTLALHTVAEAQKKGGICGFIDAEHALDPVYARKLGVDLENLLISQPDTGEQALEICDTLVRSGAVDVIVVDSVAALTPRAEIEGEMGESLPGMQARLMSQALRKLTASISRSNTMVIFINQIRMKIGVMFGSPETTTGGNALKFYASVRLDIRRIGSVKDREETVGNQTRVKVVKNKMAPPFKQVEFDIMYGEGVSKTGELVDLGVKAGVVEKAGAWFSYNSQRLGQGRENAKLFLRDNPEVAREIELALRQNAGLIAERFLEADKDGSLDDAAES.

Gly-77–Thr-84 contacts ATP.

This sequence belongs to the RecA family.

The protein localises to the cytoplasm. Functionally, can catalyze the hydrolysis of ATP in the presence of single-stranded DNA, the ATP-dependent uptake of single-stranded DNA by duplex DNA, and the ATP-dependent hybridization of homologous single-stranded DNAs. It interacts with LexA causing its activation and leading to its autocatalytic cleavage. This chain is Protein RecA, found in Chelativorans sp. (strain BNC1).